Consider the following 168-residue polypeptide: Photosystem I assembly protein Ycf3 (168 aa).

TPR repeat units lie at residues 35–68, 72–105, and 120–153; these read AFTY…EIDP, SYIL…NPFL, and GEQA…TPGN.

The protein belongs to the Ycf3 family.

The protein resides in the plastid. The protein localises to the chloroplast thylakoid membrane. In terms of biological role, essential for the assembly of the photosystem I (PSI) complex. May act as a chaperone-like factor to guide the assembly of the PSI subunits. This is Photosystem I assembly protein Ycf3 from Liriodendron tulipifera (Tuliptree).